Reading from the N-terminus, the 362-residue chain is Chorismate synthase (362 aa).

NADP(+) is bound by residues Arg48 and Arg54. Residues 131-133, 243-244, Gly287, 302-306, and Arg328 contribute to the FMN site; these read RSS, NA, and KPTSS.

The protein belongs to the chorismate synthase family. Homotetramer. It depends on FMNH2 as a cofactor.

The enzyme catalyses 5-O-(1-carboxyvinyl)-3-phosphoshikimate = chorismate + phosphate. Its pathway is metabolic intermediate biosynthesis; chorismate biosynthesis; chorismate from D-erythrose 4-phosphate and phosphoenolpyruvate: step 7/7. In terms of biological role, catalyzes the anti-1,4-elimination of the C-3 phosphate and the C-6 proR hydrogen from 5-enolpyruvylshikimate-3-phosphate (EPSP) to yield chorismate, which is the branch point compound that serves as the starting substrate for the three terminal pathways of aromatic amino acid biosynthesis. This reaction introduces a second double bond into the aromatic ring system. This Rhodopseudomonas palustris (strain ATCC BAA-98 / CGA009) protein is Chorismate synthase.